The primary structure comprises 374 residues: Lipoyl synthase, mitochondrial (374 aa).

Cys-101, Cys-106, Cys-112, Cys-132, Cys-136, Cys-139, and Ser-347 together coordinate [4Fe-4S] cluster. Positions 117-336 constitute a Radical SAM core domain; the sequence is ENGTQTATIM…EERGNDLGFL (220 aa).

It belongs to the radical SAM superfamily. Lipoyl synthase family. It depends on [4Fe-4S] cluster as a cofactor.

It localises to the mitochondrion. The enzyme catalyses [[Fe-S] cluster scaffold protein carrying a second [4Fe-4S](2+) cluster] + N(6)-octanoyl-L-lysyl-[protein] + 2 oxidized [2Fe-2S]-[ferredoxin] + 2 S-adenosyl-L-methionine + 4 H(+) = [[Fe-S] cluster scaffold protein] + N(6)-[(R)-dihydrolipoyl]-L-lysyl-[protein] + 4 Fe(3+) + 2 hydrogen sulfide + 2 5'-deoxyadenosine + 2 L-methionine + 2 reduced [2Fe-2S]-[ferredoxin]. It participates in protein modification; protein lipoylation via endogenous pathway; protein N(6)-(lipoyl)lysine from octanoyl-[acyl-carrier-protein]: step 2/2. In terms of biological role, catalyzes the radical-mediated insertion of two sulfur atoms into the C-6 and C-8 positions of the octanoyl moiety bound to the lipoyl domains of lipoate-dependent enzymes, thereby converting the octanoylated domains into lipoylated derivatives. This Drosophila pseudoobscura pseudoobscura (Fruit fly) protein is Lipoyl synthase, mitochondrial.